We begin with the raw amino-acid sequence, 361 residues long: MLYWLTSISDGGDAFNLFRYITFRAGGAFFTALIFGFIFGRPLINLLRKRQRFGQPIREDGPESHLETKQGTPTMGGLLILSALTLATLLWARWDNGYVWLVLFVTVSFGLIGFMDDFQKVTKNSHAGVSGRVRLAMGFGIAGIAGAGALLLHPEPLAGQLALPVFKDTLINLSILFIPFCMIVIAGSANAVNLTDGLDGLAIMPVMIAAGTLGVIAYAVGRVDFTSYLDVHYVPGTGEIFVFTSALIGGGLGFLWYNAPPAAVFMGDTGSLALGGALGAIAVATKHEIVLVVVGGIFVVEALSVIIQVAYFKKTGKRVFLMAPIHHHFEKKGWQESQIVIRFWIISLILALIGLATLKVR.

10 helical membrane passes run 27–47 (GAFF…INLL), 72–92 (TPTM…LLWA), 98–118 (YVWL…MDDF), 135–155 (LAMG…LHPE), 169–189 (TLIN…AGSA), 200–220 (GLAI…AYAV), 240–260 (IFVF…YNAP), 263–283 (AVFM…AIAV), 289–309 (IVLV…IIQV), and 338–358 (QIVI…LATL).

This sequence belongs to the glycosyltransferase 4 family. MraY subfamily. Mg(2+) serves as cofactor.

It is found in the cell inner membrane. The enzyme catalyses UDP-N-acetyl-alpha-D-muramoyl-L-alanyl-gamma-D-glutamyl-meso-2,6-diaminopimeloyl-D-alanyl-D-alanine + di-trans,octa-cis-undecaprenyl phosphate = di-trans,octa-cis-undecaprenyl diphospho-N-acetyl-alpha-D-muramoyl-L-alanyl-D-glutamyl-meso-2,6-diaminopimeloyl-D-alanyl-D-alanine + UMP. The protein operates within cell wall biogenesis; peptidoglycan biosynthesis. Functionally, catalyzes the initial step of the lipid cycle reactions in the biosynthesis of the cell wall peptidoglycan: transfers peptidoglycan precursor phospho-MurNAc-pentapeptide from UDP-MurNAc-pentapeptide onto the lipid carrier undecaprenyl phosphate, yielding undecaprenyl-pyrophosphoryl-MurNAc-pentapeptide, known as lipid I. The chain is Phospho-N-acetylmuramoyl-pentapeptide-transferase from Dinoroseobacter shibae (strain DSM 16493 / NCIMB 14021 / DFL 12).